A 346-amino-acid polypeptide reads, in one-letter code: Probable dual-specificity RNA methyltransferase RlmN (346 aa).

Catalysis depends on E76, which acts as the Proton acceptor. The Radical SAM core domain occupies 97–329 (SYDRATICVS…TFIRKPRGRD (233 aa)). C104 and C334 are joined by a disulfide. 3 residues coordinate [4Fe-4S] cluster: C111, C115, and C118. S-adenosyl-L-methionine-binding positions include 162–163 (GE), S192, 215–217 (SLN), and N291. C334 serves as the catalytic S-methylcysteine intermediate.

It belongs to the radical SAM superfamily. RlmN family. It depends on [4Fe-4S] cluster as a cofactor.

It is found in the cytoplasm. It catalyses the reaction adenosine(2503) in 23S rRNA + 2 reduced [2Fe-2S]-[ferredoxin] + 2 S-adenosyl-L-methionine = 2-methyladenosine(2503) in 23S rRNA + 5'-deoxyadenosine + L-methionine + 2 oxidized [2Fe-2S]-[ferredoxin] + S-adenosyl-L-homocysteine. The catalysed reaction is adenosine(37) in tRNA + 2 reduced [2Fe-2S]-[ferredoxin] + 2 S-adenosyl-L-methionine = 2-methyladenosine(37) in tRNA + 5'-deoxyadenosine + L-methionine + 2 oxidized [2Fe-2S]-[ferredoxin] + S-adenosyl-L-homocysteine. Its function is as follows. Specifically methylates position 2 of adenine 2503 in 23S rRNA and position 2 of adenine 37 in tRNAs. The protein is Probable dual-specificity RNA methyltransferase RlmN of Koribacter versatilis (strain Ellin345).